Here is a 140-residue protein sequence, read N- to C-terminus: Transcription antitermination protein NusB (140 aa).

This sequence belongs to the NusB family.

Involved in transcription antitermination. Required for transcription of ribosomal RNA (rRNA) genes. Binds specifically to the boxA antiterminator sequence of the ribosomal RNA (rrn) operons. This chain is Transcription antitermination protein NusB, found in Elusimicrobium minutum (strain Pei191).